We begin with the raw amino-acid sequence, 246 residues long: Proteolipid protein DM gamma (246 aa).

4 consecutive transmembrane segments (helical) span residues leucine 19–cysteine 35, valine 71–leucine 87, valine 118–phenylalanine 134, and phenylalanine 206–isoleucine 222.

Belongs to the myelin proteolipid protein family. In terms of tissue distribution, highly expressed in white matter in myelinating shark brain.

It is found in the membrane. The sequence is that of Proteolipid protein DM gamma from Squalus acanthias (Spiny dogfish).